The chain runs to 87 residues: Small ribosomal subunit protein bS18 (87 aa).

Belongs to the bacterial ribosomal protein bS18 family. Part of the 30S ribosomal subunit. Forms a tight heterodimer with protein bS6.

Functionally, binds as a heterodimer with protein bS6 to the central domain of the 16S rRNA, where it helps stabilize the platform of the 30S subunit. The sequence is that of Small ribosomal subunit protein bS18 from Sulfurimonas denitrificans (strain ATCC 33889 / DSM 1251) (Thiomicrospira denitrificans (strain ATCC 33889 / DSM 1251)).